Reading from the N-terminus, the 202-residue chain is NADH-quinone oxidoreductase subunit C (202 aa).

This sequence belongs to the complex I 30 kDa subunit family. In terms of assembly, NDH-1 is composed of 14 different subunits. Subunits NuoB, C, D, E, F, and G constitute the peripheral sector of the complex.

Its subcellular location is the cell inner membrane. The enzyme catalyses a quinone + NADH + 5 H(+)(in) = a quinol + NAD(+) + 4 H(+)(out). Its function is as follows. NDH-1 shuttles electrons from NADH, via FMN and iron-sulfur (Fe-S) centers, to quinones in the respiratory chain. The immediate electron acceptor for the enzyme in this species is believed to be ubiquinone. Couples the redox reaction to proton translocation (for every two electrons transferred, four hydrogen ions are translocated across the cytoplasmic membrane), and thus conserves the redox energy in a proton gradient. This is NADH-quinone oxidoreductase subunit C from Hyphomonas neptunium (strain ATCC 15444).